A 217-amino-acid polypeptide reads, in one-letter code: Oxygen-evolving enhancer protein 3-1, chloroplastic (217 aa).

The N-terminal 68 residues, 1–68 (MAQAMASMTG…GGALSQAARA (68 aa)), are a transit peptide targeting the chloroplast.

The protein belongs to the PsbQ family.

It localises to the plastid. It is found in the chloroplast thylakoid membrane. This Zea mays (Maize) protein is Oxygen-evolving enhancer protein 3-1, chloroplastic (PSBQ1).